We begin with the raw amino-acid sequence, 476 residues long: UDP-glycosyltransferase 71C3 (476 aa).

Residues Ser290, 349-351 (APQ), 366-374 (HCGWNSVLE), and 388-391 (YAEQ) contribute to the UDP-alpha-D-glucose site.

It belongs to the UDP-glycosyltransferase family.

Its function is as follows. Possesses low quercetin 3-O-glucosyltransferase activity in vitro. The sequence is that of UDP-glycosyltransferase 71C3 (UGT71C3) from Arabidopsis thaliana (Mouse-ear cress).